The primary structure comprises 85 residues: MAHKKAGGSSRNGRDSEGRRLGVKKFGGEIVVSGNIILRQRGTKYHPGANVGLGKDHTIFATTPGNVKFHKGFRGRMFVSVVAEA.

The interval 1-21 is disordered; it reads MAHKKAGGSSRNGRDSEGRRL.

The protein belongs to the bacterial ribosomal protein bL27 family.

This is Large ribosomal subunit protein bL27 from Rhodospirillum rubrum (strain ATCC 11170 / ATH 1.1.1 / DSM 467 / LMG 4362 / NCIMB 8255 / S1).